The chain runs to 83 residues: Small ribosomal subunit protein bS16 (83 aa).

It belongs to the bacterial ribosomal protein bS16 family.

The protein is Small ribosomal subunit protein bS16 of Shewanella putrefaciens (strain CN-32 / ATCC BAA-453).